The primary structure comprises 137 residues: Large ribosomal subunit protein uL16 (137 aa).

Positions M1–Q13 are enriched in basic residues. The disordered stretch occupies residues M1–T22.

Belongs to the universal ribosomal protein uL16 family. Part of the 50S ribosomal subunit.

In terms of biological role, binds 23S rRNA and is also seen to make contacts with the A and possibly P site tRNAs. The sequence is that of Large ribosomal subunit protein uL16 from Azoarcus sp. (strain BH72).